The following is a 102-amino-acid chain: ATP-dependent Clp protease adapter protein ClpS (102 aa).

The protein belongs to the ClpS family. As to quaternary structure, binds to the N-terminal domain of the chaperone ClpA.

In terms of biological role, involved in the modulation of the specificity of the ClpAP-mediated ATP-dependent protein degradation. In Shewanella putrefaciens (strain CN-32 / ATCC BAA-453), this protein is ATP-dependent Clp protease adapter protein ClpS.